The primary structure comprises 834 residues: Translation factor GUF1 homolog, mitochondrial (834 aa).

Residues 1 to 66 (MKLCGVRGSG…RPLLAEPRRY (66 aa)) constitute a mitochondrion transit peptide. In terms of domain architecture, tr-type G spans 129-314 (ACIRNVSVVA…QIIDKVPPPR (186 aa)). Residues 138–145 (AHVDHGKT), 205–209 (DTPGH), and 259–262 (TKMD) each bind GTP. A disordered region spans residues 475-507 (ATGPPETASRTKPATAAETASSDDASGSSGSSV). Low complexity predominate over residues 488 to 507 (ATAAETASSDDASGSSGSSV).

The protein belongs to the TRAFAC class translation factor GTPase superfamily. Classic translation factor GTPase family. LepA subfamily.

The protein localises to the mitochondrion inner membrane. The enzyme catalyses GTP + H2O = GDP + phosphate + H(+). Functionally, promotes mitochondrial protein synthesis. May act as a fidelity factor of the translation reaction, by catalyzing a one-codon backward translocation of tRNAs on improperly translocated ribosomes. Binds to mitochondrial ribosomes in a GTP-dependent manner. The chain is Translation factor GUF1 homolog, mitochondrial from Leishmania major.